Reading from the N-terminus, the 854-residue chain is Fibroblast growth factor receptor 1 (854 aa).

The signal sequence occupies residues 1-20 (MSGLFFLLSELLILLGKINS). Topologically, residues 21–383 (VSKKSLCHPE…NFFMNSVPLS (363 aa)) are extracellular. One can recognise an Ig-like C2-type 1 domain in the interval 29 to 120 (PELFKIDNKL…SSVFFLINVT (92 aa)). A disulfide bond links cysteine 50 and cysteine 102. Asparagine 95, asparagine 99, asparagine 110, asparagine 118, asparagine 140, asparagine 175, asparagine 202, asparagine 248, asparagine 283, asparagine 317, and asparagine 346 each carry an N-linked (GlcNAc...) asparagine glycan. 2 consecutive Ig-like C2-type domains span residues 147–259 (PEMG…FTFT) and 268–369 (PHLT…LSVI). A disulfide bond links cysteine 166 and cysteine 242. Cysteine 288 and cysteine 353 are oxidised to a cystine. A helical transmembrane segment spans residues 384-404 (IFLVIGFFVAIILLSLIIYCF). Over 405–854 (FLQYKNAVDS…SDYLEPKCLV (450 aa)) the chain is Cytoplasmic. The Protein kinase domain maps to 551–822 (KITNKKLGEG…EIVEILIDII (272 aa)). ATP-binding positions include 557–565 (LGEGAFGMV) and lysine 585. Residue aspartate 689 is the Proton acceptor of the active site. Tyrosine 718 is subject to Phosphotyrosine; by autocatalysis.

Belongs to the protein kinase superfamily. Tyr protein kinase family. Fibroblast growth factor receptor subfamily. In terms of tissue distribution, expressed in brain, stem cells and the mesenchymal cells.

The protein localises to the membrane. The enzyme catalyses L-tyrosyl-[protein] + ATP = O-phospho-L-tyrosyl-[protein] + ADP + H(+). Functionally, receptor for basic fibroblast growth factor. The chain is Fibroblast growth factor receptor 1 (FGFR1) from Dugesia japonica (Planarian).